We begin with the raw amino-acid sequence, 195 residues long: 3-hydroxyanthranilate 3,4-dioxygenase (195 aa).

R50 provides a ligand contact to O2. Fe cation is bound by residues H54, E60, and H102. E60 provides a ligand contact to substrate. 2 residues coordinate substrate: R106 and E116. The a divalent metal cation site is built by C131, C136, C170, and C173.

Belongs to the 3-HAO family. Requires Fe(2+) as cofactor.

It is found in the cytoplasm. The catalysed reaction is 3-hydroxyanthranilate + O2 = (2Z,4Z)-2-amino-3-carboxymuconate 6-semialdehyde. The protein operates within cofactor biosynthesis; NAD(+) biosynthesis; quinolinate from L-kynurenine: step 3/3. Catalyzes the oxidative ring opening of 3-hydroxyanthranilate to 2-amino-3-carboxymuconate semialdehyde, which spontaneously cyclizes to quinolinate. The chain is 3-hydroxyanthranilate 3,4-dioxygenase (bna1) from Aspergillus terreus (strain NIH 2624 / FGSC A1156).